Reading from the N-terminus, the 634-residue chain is Formate--tetrahydrofolate ligase (634 aa).

78 to 85 (TPLGEGKS) is an ATP binding site.

The protein belongs to the formate--tetrahydrofolate ligase family. Homodimer.

The enzyme catalyses (6S)-5,6,7,8-tetrahydrofolate + formate + ATP = (6R)-10-formyltetrahydrofolate + ADP + phosphate. It participates in one-carbon metabolism; tetrahydrofolate interconversion. This Arabidopsis thaliana (Mouse-ear cress) protein is Formate--tetrahydrofolate ligase (THFS).